A 39-amino-acid chain; its full sequence is Photosystem II reaction center protein L (39 aa).

Residues 18–38 (SLYLGVLSVLVLGILFSSYFF) traverse the membrane as a helical segment.

This sequence belongs to the PsbL family. PSII is composed of 1 copy each of membrane proteins PsbA, PsbB, PsbC, PsbD, PsbE, PsbF, PsbH, PsbI, PsbJ, PsbK, PsbL, PsbM, PsbT, PsbX, PsbY, Psb30/Ycf12, peripheral proteins PsbO, CyanoQ (PsbQ), PsbU, PsbV and a large number of cofactors. It forms dimeric complexes.

The protein resides in the cellular thylakoid membrane. Functionally, one of the components of the core complex of photosystem II (PSII). PSII is a light-driven water:plastoquinone oxidoreductase that uses light energy to abstract electrons from H(2)O, generating O(2) and a proton gradient subsequently used for ATP formation. It consists of a core antenna complex that captures photons, and an electron transfer chain that converts photonic excitation into a charge separation. This subunit is found at the monomer-monomer interface and is required for correct PSII assembly and/or dimerization. In Prochlorococcus marinus (strain MIT 9515), this protein is Photosystem II reaction center protein L.